We begin with the raw amino-acid sequence, 503 residues long: Probable folate-biopterin transporter 6 (503 aa).

The next 12 membrane-spanning stretches (helical) occupy residues 56-76 (SFVLGVVLVYGVNQGFSGSIF), 101-121 (LYYIPWVMRPIWGLFTDVFPI), 128-148 (PYFVVSGVLGLVSAIAIVVLG), 153-173 (ALALSCLLGVSAAMAIADVVI), 194-214 (LCMVCSSAGALVGYATSGVFV), 221-241 (GALGVLAFSPATIVILGFFIY), 281-301 (LYMFISLALNISTHEGHFYWY), 314-334 (FVGIIYAVGALASMFGVLIYH), 344-364 (NILFFAQLLYVFSGMLDLVFI), 369-389 (LTLGIPDSLFVITEESFTKMI), 404-424 (LCPLGIEGTFFAFLMCIDSFG), and 450-470 (WLVILIRNILRLVTVCFVFLV).

Belongs to the major facilitator superfamily. Folate-biopterin transporter (TC 2.A.71) family.

It is found in the membrane. Functionally, could mediate folate transport. The polypeptide is Probable folate-biopterin transporter 6 (Arabidopsis thaliana (Mouse-ear cress)).